Here is a 149-residue protein sequence, read N- to C-terminus: Probable flagellum biosynthesis repressor protein FlbT (149 aa).

The protein belongs to the FlbT family.

Its function is as follows. Has a post-transcriptional repressor function in flagellum biogenesis. Associates with the 5'-UTR of fljK mRNA and promotes its degradation. In Allorhizobium ampelinum (strain ATCC BAA-846 / DSM 112012 / S4) (Agrobacterium vitis (strain S4)), this protein is Probable flagellum biosynthesis repressor protein FlbT.